A 602-amino-acid chain; its full sequence is Oligoendopeptidase F, chromosomal (602 aa).

His-388 lines the Zn(2+) pocket. Residue Glu-389 is part of the active site. 2 residues coordinate Zn(2+): His-392 and His-395.

The protein belongs to the peptidase M3B family. It depends on Zn(2+) as a cofactor.

Its function is as follows. Hydrolyzes peptides containing between 7 and 17 amino acids with a rather wide specificity. The protein is Oligoendopeptidase F, chromosomal (pepF2) of Lactococcus lactis subsp. cremoris (Streptococcus cremoris).